We begin with the raw amino-acid sequence, 81 residues long: Defensin-like protein 130 (81 aa).

A signal peptide spans 1–21 (MTKNTSLTIFMVVLVIGMLYT). Cystine bridges form between cysteine 32–cysteine 81, cysteine 41–cysteine 63, cysteine 46–cysteine 75, and cysteine 50–cysteine 77.

It belongs to the DEFL family.

It localises to the secreted. The sequence is that of Defensin-like protein 130 (LCR28) from Arabidopsis thaliana (Mouse-ear cress).